The following is a 147-amino-acid chain: Protein-export protein SecB (147 aa).

It belongs to the SecB family. Homotetramer, a dimer of dimers. One homotetramer interacts with 1 SecA dimer.

Its subcellular location is the cytoplasm. Functionally, one of the proteins required for the normal export of preproteins out of the cell cytoplasm. It is a molecular chaperone that binds to a subset of precursor proteins, maintaining them in a translocation-competent state. It also specifically binds to its receptor SecA. In Neisseria meningitidis serogroup C (strain 053442), this protein is Protein-export protein SecB.